A 56-amino-acid polypeptide reads, in one-letter code: Small ribosomal subunit protein uS14 (56 aa).

Zn(2+)-binding residues include Cys-21, Cys-24, Cys-39, and Cys-42.

This sequence belongs to the universal ribosomal protein uS14 family. The cofactor is Zn(2+).

The protein is Small ribosomal subunit protein uS14 (RPS29) of Eremothecium gossypii (strain ATCC 10895 / CBS 109.51 / FGSC 9923 / NRRL Y-1056) (Yeast).